Consider the following 100-residue polypeptide: Large ribosomal subunit protein bL21 (100 aa).

It belongs to the bacterial ribosomal protein bL21 family. Part of the 50S ribosomal subunit. Contacts protein L20.

Functionally, this protein binds to 23S rRNA in the presence of protein L20. This Paramagnetospirillum magneticum (strain ATCC 700264 / AMB-1) (Magnetospirillum magneticum) protein is Large ribosomal subunit protein bL21.